A 200-amino-acid chain; its full sequence is Peptidyl-tRNA hydrolase (200 aa).

Residue Tyr-23 participates in tRNA binding. Catalysis depends on His-28, which acts as the Proton acceptor. 3 residues coordinate tRNA: Phe-79, Asn-81, and Asn-127.

Belongs to the PTH family. Monomer.

Its subcellular location is the cytoplasm. It carries out the reaction an N-acyl-L-alpha-aminoacyl-tRNA + H2O = an N-acyl-L-amino acid + a tRNA + H(+). Functionally, hydrolyzes ribosome-free peptidyl-tRNAs (with 1 or more amino acids incorporated), which drop off the ribosome during protein synthesis, or as a result of ribosome stalling. In terms of biological role, catalyzes the release of premature peptidyl moieties from peptidyl-tRNA molecules trapped in stalled 50S ribosomal subunits, and thus maintains levels of free tRNAs and 50S ribosomes. The chain is Peptidyl-tRNA hydrolase from Streptomyces coelicolor (strain ATCC BAA-471 / A3(2) / M145).